The sequence spans 177 residues: Large ribosomal subunit protein uL10 (177 aa).

This sequence belongs to the universal ribosomal protein uL10 family. In terms of assembly, part of the ribosomal stalk of the 50S ribosomal subunit. The N-terminus interacts with L11 and the large rRNA to form the base of the stalk. The C-terminus forms an elongated spine to which L12 dimers bind in a sequential fashion forming a multimeric L10(L12)X complex.

Its function is as follows. Forms part of the ribosomal stalk, playing a central role in the interaction of the ribosome with GTP-bound translation factors. The polypeptide is Large ribosomal subunit protein uL10 (Xanthomonas oryzae pv. oryzae (strain MAFF 311018)).